The primary structure comprises 261 residues: ATP synthase subunit a (261 aa).

The next 6 helical transmembrane spans lie at I45–L65, V107–F127, M133–M153, M162–I182, I209–I229, and L232–L252.

This sequence belongs to the ATPase A chain family. F-type ATPases have 2 components, CF(1) - the catalytic core - and CF(0) - the membrane proton channel. CF(1) has five subunits: alpha(3), beta(3), gamma(1), delta(1), epsilon(1). CF(0) has four main subunits: a, b, b' and c.

It localises to the cell inner membrane. Key component of the proton channel; it plays a direct role in the translocation of protons across the membrane. The protein is ATP synthase subunit a of Cereibacter sphaeroides (strain ATCC 17025 / ATH 2.4.3) (Rhodobacter sphaeroides).